We begin with the raw amino-acid sequence, 506 residues long: UDP-glycosyltransferase eriJ (506 aa).

Belongs to the UDP-glycosyltransferase family.

It catalyses the reaction 11-O-acetylcyathatriol + UDP-alpha-D-xylose = erinacine Q + UDP + H(+). The catalysed reaction is 11-O-acetylcyathatriol + UDP-alpha-D-glucose = erinacine Q2 + UDP + H(+). It participates in secondary metabolite biosynthesis. In terms of biological role, UDP-glycosyltransferase; part of the gene cluster that mediates the biosynthesis of erinacines, cyathane-xylosides that show unique biological activities, including leishmanicidal activity, stimulating activity for nerve growth-factor synthesis, and agonistic activity toward the kappa opioid receptor. Within the pathway, eriJ tranfers xylose from UDP-xylose onto C-14 of 11-O-acetyl-cyathatriol to form eracine Q, and, at a lower rate, glucose from UDP-D-glucose to produce eracine Q2. The first step of the erinacines biosynthesis pathway is catalyzed by the geranylgeranyl diphosphate (GGPP) synthase eriE via conversion of farnesyl pyrophosphate and isopentyl pyrophosphate into geranylgeranyl pyrophosphate (GGPP). GGPP is then substrate of the diterpene cyclase eriG for the production of cyatha-3,12-diene. The cytochrome P450 monooxygenase eriI then hydroxylates cyatha-3,12-diene at C-14 of the seven-membered ring to produce erinacol, which is further hydroxylated at C-15 by the cytochrome P450 monooxygenase eriC to yield cyathadiol. The cytochrome P450 monooxygenase eriA then catalyzes C-11 hydroxylation in the presence of the short chain dehydrogenase/reductase (SDR) eriH, which leads to the production of cyathatriol. The acetyltransferase eriL converts cyathatriol into 11-O-acetyl-cyathatriol. The SDR eriH catalyzes further oxidation of 11-O-acetyl-cyathatriol into 1-O-acetylcyathin A3. Finally, the glycosyl transferase eriJ tranfers xylose from UDP-xylose onto C-14 of 11-O-acetyl-cyathatriol to form eracine Q. EriJ is also able to convert 11-O-acetyl-cyathatriol to eracine Q2 by using UDP-D-glucose as cosubstrate, but at a lower rate. The protein is UDP-glycosyltransferase eriJ of Hericium erinaceus (Lion's mane mushroom).